The primary structure comprises 187 residues: Large ribosomal subunit protein bL12cx (187 aa).

A chloroplast-targeting transit peptide spans 1-54 (MASTTLSIATTIRSSSPLTSASTHHFLSKPTAIEFPFRLSSSSSHRAINLRPIS).

It belongs to the bacterial ribosomal protein bL12 family.

The protein localises to the plastid. Its subcellular location is the chloroplast. This Arabidopsis thaliana (Mouse-ear cress) protein is Large ribosomal subunit protein bL12cx (RPL12C).